Consider the following 409-residue polypeptide: Probable ferredoxin reductase CtmF (409 aa).

Positions 15, 37, 50, 83, 279, and 298 each coordinate FAD.

Belongs to the FAD-dependent oxidoreductase family. FAD serves as cofactor.

It participates in terpene metabolism; monoterpene degradation. In terms of biological role, involved in the degradation of the cyclic monoterpene limonene. Probably part of an electron transfer system involved in the oxidation of limonene to perillyl alcohol. This Castellaniella defragrans (strain DSM 12143 / CCUG 39792 / 65Phen) (Alcaligenes defragrans) protein is Probable ferredoxin reductase CtmF.